Consider the following 144-residue polypeptide: Ribonuclease VapC37 (144 aa).

Residues 3 to 137 form the PINc domain; it reads IVDANVLLYA…DFGRFEGVRW (135 aa). Mg(2+) is bound by residues D5 and D90.

The protein belongs to the PINc/VapC protein family. Mg(2+) serves as cofactor.

Its subcellular location is the secreted. In terms of biological role, probable toxic component of a type II toxin-antitoxin (TA) system. An RNase. Upon expression in M.smegmatis inhibits colony formation. The putative cognate antitoxin is VapB37. The chain is Ribonuclease VapC37 from Mycobacterium tuberculosis (strain ATCC 25618 / H37Rv).